The chain runs to 215 residues: Probable phosphoglycerate mutase GpmB (215 aa).

Substrate is bound by residues 8–15 (RHGETQWN), 21–22 (QG), Arg58, Lys60, 82–85 (ELDM), 104–105 (RR), and 151–152 (GI). Residue His9 is the Tele-phosphohistidine intermediate of the active site. The Proton donor/acceptor role is filled by Glu82.

The protein belongs to the phosphoglycerate mutase family. GpmB subfamily.

It catalyses the reaction (2R)-2-phosphoglycerate = (2R)-3-phosphoglycerate. It participates in carbohydrate degradation; glycolysis; pyruvate from D-glyceraldehyde 3-phosphate: step 3/5. The polypeptide is Probable phosphoglycerate mutase GpmB (Salmonella agona (strain SL483)).